The primary structure comprises 67 residues: Large ribosomal subunit protein bL31 (67 aa).

It belongs to the bacterial ribosomal protein bL31 family. Type A subfamily. In terms of assembly, part of the 50S ribosomal subunit.

Functionally, binds the 23S rRNA. This Wolinella succinogenes (strain ATCC 29543 / DSM 1740 / CCUG 13145 / JCM 31913 / LMG 7466 / NCTC 11488 / FDC 602W) (Vibrio succinogenes) protein is Large ribosomal subunit protein bL31.